We begin with the raw amino-acid sequence, 147 residues long: UPF0178 protein VIBHAR_03247 (147 aa).

Belongs to the UPF0178 family.

This chain is UPF0178 protein VIBHAR_03247, found in Vibrio campbellii (strain ATCC BAA-1116).